The sequence spans 854 residues: Probable inactive serine/threonine-protein kinase DDB_G0274821 (854 aa).

The 266-residue stretch at 1-266 folds into the Protein kinase domain; the sequence is MPIKESFKRI…WPKLFIHPFF (266 aa). Residues Asn-32 and Asn-106 are each glycosylated (N-linked (GlcNAc...) asparagine). The tract at residues 116-135 is disordered; it reads NNNNNNNNNNNNNNNNNNNN. 4 N-linked (GlcNAc...) asparagine glycosylation sites follow: Asn-163, Asn-279, Asn-283, and Asn-290. The disordered stretch occupies residues 289-331; sequence LNKSSSSSSSSSSSSSSSSSSSSSSSLSFQQQQQPNNISSPNL. Low complexity predominate over residues 292–322; it reads SSSSSSSSSSSSSSSSSSSSSSSLSFQQQQQ. N-linked (GlcNAc...) asparagine glycosylation is found at Asn-325, Asn-347, and Asn-365. The interval 384 to 408 is disordered; that stretch reads IISPNRPSSPPLSSLSSCSSSSSSS. Asn-414 carries an N-linked (GlcNAc...) asparagine glycan. The disordered stretch occupies residues 425-446; the sequence is NNNNNNNNNNNNNNNNNNNNNN. N-linked (GlcNAc...) asparagine glycans are attached at residues Asn-520, Asn-541, and Asn-620. Residues 627–650 form a disordered region; the sequence is SSPPPSSSSSSSSPSSPSSTSPSL. A compositionally biased stretch (low complexity) spans 633 to 650; sequence SSSSSSSPSSPSSTSPSL. A glycan (N-linked (GlcNAc...) asparagine) is linked at Asn-757. A helical membrane pass occupies residues 770–792; the sequence is HWRVQISFLNILFILITINNNFI.

This sequence belongs to the protein kinase superfamily. Ser/Thr protein kinase family.

It is found in the membrane. This Dictyostelium discoideum (Social amoeba) protein is Probable inactive serine/threonine-protein kinase DDB_G0274821.